Here is a 177-residue protein sequence, read N- to C-terminus: MANPEKAAAVAELKDLFSNSHAAVLTEYRGLTVAQLKTLRRALGENAEYAVVKNTLTAIAARESGIEAFEGQLNGPSAIAFVSGDAVEAAKSLRDFAKDNPQLVVKGGYLDGVAMDENEIKKLADLESREVLLSKVAGAAKASMSKAAALFQAPLSKTVRTADALRAKLDEQGENAA.

Belongs to the universal ribosomal protein uL10 family. As to quaternary structure, part of the ribosomal stalk of the 50S ribosomal subunit. The N-terminus interacts with L11 and the large rRNA to form the base of the stalk. The C-terminus forms an elongated spine to which L12 dimers bind in a sequential fashion forming a multimeric L10(L12)X complex.

Functionally, forms part of the ribosomal stalk, playing a central role in the interaction of the ribosome with GTP-bound translation factors. The sequence is that of Large ribosomal subunit protein uL10 from Kocuria rhizophila (strain ATCC 9341 / DSM 348 / NBRC 103217 / DC2201).